Reading from the N-terminus, the 558-residue chain is CTP synthase (558 aa).

The segment at 1-267 (MTKFVFVTGG…AQQTLELLNL (267 aa)) is amidoligase domain. Serine 13 contacts CTP. Serine 13 provides a ligand contact to UTP. Residues 14 to 19 (SIGKGI) and aspartate 71 each bind ATP. Aspartate 71 and glutamate 141 together coordinate Mg(2+). Residues 148 to 150 (DIE), 188 to 193 (KTKPTQ), and lysine 224 each bind CTP. UTP contacts are provided by residues 188-193 (KTKPTQ) and lysine 224. A Glutamine amidotransferase type-1 domain is found at 292–534 (EVALVGKYVQ…VKASVDYNHV (243 aa)). Glycine 354 provides a ligand contact to L-glutamine. Cysteine 381 acts as the Nucleophile; for glutamine hydrolysis in catalysis. L-glutamine is bound by residues 382-385 (MGMQ), glutamate 405, and arginine 462. Catalysis depends on residues histidine 507 and glutamate 509.

This sequence belongs to the CTP synthase family. As to quaternary structure, homotetramer.

It catalyses the reaction UTP + L-glutamine + ATP + H2O = CTP + L-glutamate + ADP + phosphate + 2 H(+). The enzyme catalyses L-glutamine + H2O = L-glutamate + NH4(+). It carries out the reaction UTP + NH4(+) + ATP = CTP + ADP + phosphate + 2 H(+). It participates in pyrimidine metabolism; CTP biosynthesis via de novo pathway; CTP from UDP: step 2/2. With respect to regulation, allosterically activated by GTP, when glutamine is the substrate; GTP has no effect on the reaction when ammonia is the substrate. The allosteric effector GTP functions by stabilizing the protein conformation that binds the tetrahedral intermediate(s) formed during glutamine hydrolysis. Inhibited by the product CTP, via allosteric rather than competitive inhibition. In terms of biological role, catalyzes the ATP-dependent amination of UTP to CTP with either L-glutamine or ammonia as the source of nitrogen. Regulates intracellular CTP levels through interactions with the four ribonucleotide triphosphates. The chain is CTP synthase from Gloeothece citriformis (strain PCC 7424) (Cyanothece sp. (strain PCC 7424)).